The sequence spans 502 residues: Maturase K (502 aa).

It belongs to the intron maturase 2 family. MatK subfamily.

The protein resides in the plastid. It localises to the chloroplast. Its function is as follows. Usually encoded in the trnK tRNA gene intron. Probably assists in splicing its own and other chloroplast group II introns. In Stanleya pinnata (Prince's plume), this protein is Maturase K.